The chain runs to 708 residues: MATQLNDLPDVILSNIIAAVTDVRSRNSTSFVCRKWLVLERSTRVSLTLRGNVRDLFMLPTCFRSITHLDLSLISPWGHPLLSPTTPDPSLTAHLLHHAFPFVTSLVVYTRHPFTLQLLPPLWPQLKQIKLVRWHQRPQLATGDEFNMLFENCPNLSSLDLSTFYCWTDDIPTALVSHPMVASNLVTLNLLNPCFSEGFKTDEIKAITLACPNLKEFRVVCMFDPRYIGFVGDEGLVAVATNCPKLSTLHLADTSALSNSRGDINDDGFTQEDAKFGVSTLIEVFSGLPLLEELVLDVCNNVRDTGPALEILNKKCPRLRSLKLGQFHGISMPVESKLDGVALCQGLESLSIRNVGDLNDMGLIAIGRGCSRLAKFEVQGCKKITVRGMRTLASLLKKTLIDVKISCCKNLGAAYSLKALEPIQNRIQKLHIDCVWDSVEEFENLDGYGYGFDLNRRDGCEASSNFGDTFGCEEDAYLFKEKKRCKFSYDLNSLYEEVNGHGNGYSGRSWDRLQYLSLWIGVGDLLTPLTAAGLEDCPNLEEIKIRVEGDCRLWSKHSEQAFGLSTLLHYPKLSKMHLDCGDTIGYAHTAPSGQVDLSLWERFYLLGIGTLSLTELDYWPPQDMDVNQRCLSLPAAGLLQECLTLRKLFIHGTAHEHFMMFLLRIPNLRDVQLREDYYPAPENDMSTEMRADSLSRFEAALNRRPISD.

The 48-residue stretch at 2–49 (ATQLNDLPDVILSNIIAAVTDVRSRNSTSFVCRKWLVLERSTRVSLTL) folds into the F-box domain.

In terms of assembly, part of a putative SCF (SKP1/Cullin/F-box) ubiquitin ligase complex. Interacts with DAD2. Interacts with KAI2IA in the presence of (-)-germacrene D. As to expression, mainly expressed in fully expanded leaves, lateral roots, axillary and shoot apex, and, to a lower extent, in internodes and nodes.

It localises to the nucleus. In terms of biological role, component of SCF(ASK-cullin-F-box) E3 ubiquitin ligase complexes, which may mediate the ubiquitination and subsequent proteasomal degradation of target proteins. Is necessary for responses to strigolactones and may be involved in the ubiquitin-mediated degradation of specific proteins that activate axillary growth. Targets probably SMAX1A to degradation upon the formation of an E3 SCF ubiquitin ligase complex (ASK-cullin-F-box) containing MAX2A and KAI2IA in response to (-)-germacrene D in the stigma. This chain is F-box protein MAX2 homolog A, found in Petunia hybrida (Petunia).